We begin with the raw amino-acid sequence, 641 residues long: 1-deoxy-D-xylulose-5-phosphate synthase (641 aa).

Residues histidine 80 and 121–123 contribute to the thiamine diphosphate site; that span reads GHS. Aspartate 152 is a Mg(2+) binding site. Residues 153–154, asparagine 181, tyrosine 290, and glutamate 372 contribute to the thiamine diphosphate site; that span reads GS. Asparagine 181 is a binding site for Mg(2+).

This sequence belongs to the transketolase family. DXPS subfamily. In terms of assembly, homodimer. The cofactor is Mg(2+). It depends on thiamine diphosphate as a cofactor.

The catalysed reaction is D-glyceraldehyde 3-phosphate + pyruvate + H(+) = 1-deoxy-D-xylulose 5-phosphate + CO2. It functions in the pathway metabolic intermediate biosynthesis; 1-deoxy-D-xylulose 5-phosphate biosynthesis; 1-deoxy-D-xylulose 5-phosphate from D-glyceraldehyde 3-phosphate and pyruvate: step 1/1. Functionally, catalyzes the acyloin condensation reaction between C atoms 2 and 3 of pyruvate and glyceraldehyde 3-phosphate to yield 1-deoxy-D-xylulose-5-phosphate (DXP). In Rhodobacter capsulatus (Rhodopseudomonas capsulata), this protein is 1-deoxy-D-xylulose-5-phosphate synthase.